The primary structure comprises 185 residues: Crossover junction endodeoxyribonuclease RuvC (185 aa).

Residues D7, E66, and D137 contribute to the active site. Residues D7, E66, and D137 each contribute to the Mg(2+) site.

The protein belongs to the RuvC family. Homodimer which binds Holliday junction (HJ) DNA. The HJ becomes 2-fold symmetrical on binding to RuvC with unstacked arms; it has a different conformation from HJ DNA in complex with RuvA. In the full resolvosome a probable DNA-RuvA(4)-RuvB(12)-RuvC(2) complex forms which resolves the HJ. Requires Mg(2+) as cofactor.

The protein localises to the cytoplasm. The catalysed reaction is Endonucleolytic cleavage at a junction such as a reciprocal single-stranded crossover between two homologous DNA duplexes (Holliday junction).. Functionally, the RuvA-RuvB-RuvC complex processes Holliday junction (HJ) DNA during genetic recombination and DNA repair. Endonuclease that resolves HJ intermediates. Cleaves cruciform DNA by making single-stranded nicks across the HJ at symmetrical positions within the homologous arms, yielding a 5'-phosphate and a 3'-hydroxyl group; requires a central core of homology in the junction. The consensus cleavage sequence is 5'-(A/T)TT(C/G)-3'. Cleavage occurs on the 3'-side of the TT dinucleotide at the point of strand exchange. HJ branch migration catalyzed by RuvA-RuvB allows RuvC to scan DNA until it finds its consensus sequence, where it cleaves and resolves the cruciform DNA. The sequence is that of Crossover junction endodeoxyribonuclease RuvC from Anaeromyxobacter sp. (strain K).